The following is a 149-amino-acid chain: Large ribosomal subunit protein bL20m (149 aa).

Residues 1–9 (MVFLTTRLW) constitute a mitochondrion transit peptide.

It belongs to the bacterial ribosomal protein bL20 family. As to quaternary structure, component of the mitochondrial ribosome large subunit (39S) which comprises a 16S rRNA and about 50 distinct proteins. Interacts with OXA1L.

It localises to the mitochondrion. This is Large ribosomal subunit protein bL20m (Mrpl20) from Mus musculus (Mouse).